A 185-amino-acid polypeptide reads, in one-letter code: Elongation factor P (185 aa).

Belongs to the elongation factor P family.

It is found in the cytoplasm. It participates in protein biosynthesis; polypeptide chain elongation. Its function is as follows. Involved in peptide bond synthesis. Stimulates efficient translation and peptide-bond synthesis on native or reconstituted 70S ribosomes in vitro. Probably functions indirectly by altering the affinity of the ribosome for aminoacyl-tRNA, thus increasing their reactivity as acceptors for peptidyl transferase. This Brevibacillus brevis (strain 47 / JCM 6285 / NBRC 100599) protein is Elongation factor P.